The following is an 88-amino-acid chain: Sapecin-B (88 aa).

An N-terminal signal peptide occupies residues 1–24; it reads MKFLTSLLLLFVVVMVSAVNLSMA. The propeptide occupies 25 to 54; the sequence is KESANQLTERLQELDGAAIQEPAELNRHKR. Intrachain disulfides connect Cys57/Cys78, Cys64/Cys84, and Cys68/Cys86.

This sequence belongs to the invertebrate defensin family. Type 1 subfamily. Hemocytes and fat body.

The protein resides in the secreted. Sapecins, which are potent bactericidal proteins, are produced in response to injury. Sapecin B is cytotoxic to Gram-positive bacteria. This is Sapecin-B from Sarcophaga peregrina (Flesh fly).